A 119-amino-acid chain; its full sequence is Large ribosomal subunit protein bL20 (119 aa).

It belongs to the bacterial ribosomal protein bL20 family.

Its function is as follows. Binds directly to 23S ribosomal RNA and is necessary for the in vitro assembly process of the 50S ribosomal subunit. It is not involved in the protein synthesizing functions of that subunit. In Paracoccus denitrificans (strain Pd 1222), this protein is Large ribosomal subunit protein bL20.